Here is a 444-residue protein sequence, read N- to C-terminus: Tol-Pal system protein TolB (444 aa).

The signal sequence occupies residues Met1 to Ala19.

It belongs to the TolB family. In terms of assembly, the Tol-Pal system is composed of five core proteins: the inner membrane proteins TolA, TolQ and TolR, the periplasmic protein TolB and the outer membrane protein Pal. They form a network linking the inner and outer membranes and the peptidoglycan layer.

It is found in the periplasm. Part of the Tol-Pal system, which plays a role in outer membrane invagination during cell division and is important for maintaining outer membrane integrity. The protein is Tol-Pal system protein TolB of Rickettsia rickettsii (strain Sheila Smith).